Consider the following 405-residue polypeptide: Argininosuccinate synthase (405 aa).

Residues 11 to 19 and Ala38 contribute to the ATP site; that span reads AYSGGLDTS. The L-citrulline site is built by Tyr91 and Ser96. Gly121 contacts ATP. Residues Thr123, Asn127, and Asp128 each coordinate L-aspartate. Asn127 serves as a coordination point for L-citrulline. L-citrulline contacts are provided by Arg131, Ser182, Ser191, Glu267, and Tyr279.

This sequence belongs to the argininosuccinate synthase family. Type 1 subfamily. In terms of assembly, homotetramer.

The protein localises to the cytoplasm. It carries out the reaction L-citrulline + L-aspartate + ATP = 2-(N(omega)-L-arginino)succinate + AMP + diphosphate + H(+). The protein operates within amino-acid biosynthesis; L-arginine biosynthesis; L-arginine from L-ornithine and carbamoyl phosphate: step 2/3. The sequence is that of Argininosuccinate synthase from Sphingopyxis alaskensis (strain DSM 13593 / LMG 18877 / RB2256) (Sphingomonas alaskensis).